We begin with the raw amino-acid sequence, 1360 residues long: DNA-directed RNA polymerase subunit beta (1360 aa).

The protein belongs to the RNA polymerase beta chain family. As to quaternary structure, the RNAP catalytic core consists of 2 alpha, 1 beta, 1 beta' and 1 omega subunit. When a sigma factor is associated with the core the holoenzyme is formed, which can initiate transcription.

It catalyses the reaction RNA(n) + a ribonucleoside 5'-triphosphate = RNA(n+1) + diphosphate. DNA-dependent RNA polymerase catalyzes the transcription of DNA into RNA using the four ribonucleoside triphosphates as substrates. The protein is DNA-directed RNA polymerase subunit beta of Caulobacter sp. (strain K31).